The primary structure comprises 162 residues: Caveolin-2 (162 aa).

Residues 1–86 lie on the Cytoplasmic side of the membrane; that stretch reads MGLETEKADV…FEMSKYVIYK (86 aa). At Y19 the chain carries Phosphotyrosine; by SRC. 2 positions are modified to phosphoserine: S20 and S23. Y27 carries the post-translational modification Phosphotyrosine; by SRC. The segment at residues 87-107 is an intramembrane region (helical); the sequence is FLTVFLAIPLAFAAGILFATL. The Cytoplasmic segment spans residues 108–162; that stretch reads SCLHIWIIMPFVKTCLMVLPSVQTIWKSVTDVVIAPLCTSVGRSFSSVSLQLSHD.

The protein belongs to the caveolin family. As to quaternary structure, monomer or homodimer. Interacts with CAV1; the interaction forms a stable heterooligomeric complex that is required for targeting to lipid rafts and for caveolae formation. Tyrosine phosphorylated forms do not form heterooligomers with the Tyr-19-phosphorylated form existing as a monomer or dimer, and the Tyr-27-form as a monomer only. Interacts (tyrosine phosphorylated form) with the SH2 domain-containing proteins, RASA1, NCK1 and SRC. Interacts (tyrosine phosphorylated form) with INSR, the interaction (Tyr-27-phosphorylated form) is increased on insulin stimulation. Interacts (Tyr-19 phosphorylated form) with MAPK1 (phosphorylated form); the interaction, promoted by insulin, leads to nuclear location and MAPK1 activation. Interacts with STAT3; the interaction is increased on insulin-induced tyrosine phosphorylation leading to STAT activation. Phosphorylated on serine and tyrosine residues. CAV1 promotes phosphorylation on Ser-23 which then targets the complex to the plasma membrane, lipid rafts and caveolae. Phosphorylation on both Tyr-19 and Tyr-27 is required for insulin-induced 'Ser-727' phosphorylation of STAT3 and its activation. Phosphorylation on Tyr-19 is required for insulin-induced phosphorylation of MAPK1 and DNA binding of STAT3. Tyrosine phosphorylation is induced by both EGF and insulin.

The protein localises to the nucleus. Its subcellular location is the cytoplasm. It localises to the golgi apparatus membrane. The protein resides in the cell membrane. It is found in the membrane. The protein localises to the caveola. Its function is as follows. May act as a scaffolding protein within caveolar membranes. Interacts directly with G-protein alpha subunits and can functionally regulate their activity. Acts as an accessory protein in conjunction with CAV1 in targeting to lipid rafts and driving caveolae formation. Positive regulator of cellular mitogenesis of the MAPK signaling pathway. Required for the insulin-stimulated nuclear translocation and activation of MAPK1 and STAT3, and the subsequent regulation of cell cycle progression. This Muntiacus muntjak (Barking deer) protein is Caveolin-2 (CAV2).